The following is a 160-amino-acid chain: Nascent polypeptide-associated complex subunit alpha (160 aa).

In terms of domain architecture, NAC-A/B spans 10-75 (TKGEKKTREA…HSFDDIASRL (66 aa)). Residues 120-159 (VNPKDVEVVMKETKASREKVVETLIATKNDLVSAVLELTT) enclose the UBA domain.

The protein belongs to the NAC-alpha family. As to quaternary structure, part of the nascent polypeptide-associated complex (NAC), consisting of nacA and nacB.

Its subcellular location is the cytoplasm. It localises to the nucleus. Functionally, component of the nascent polypeptide-associated complex (NAC), a dynamic component of the ribosomal exit tunnel, protecting the emerging polypeptides from interaction with other cytoplasmic proteins to ensure appropriate nascent protein targeting. The NAC complex also promotes mitochondrial protein import by enhancing productive ribosome interactions with the outer mitochondrial membrane and blocks the inappropriate interaction of ribosomes translating non-secretory nascent polypeptides with translocation sites in the membrane of the endoplasmic reticulum. May also be involved in transcription regulation. The protein is Nascent polypeptide-associated complex subunit alpha (nacA) of Dictyostelium discoideum (Social amoeba).